The primary structure comprises 129 residues: Fluoride-specific ion channel FluC 2 (129 aa).

4 helical membrane-spanning segments follow: residues 9–29 (LGTLISVFFFGMIGGTLRYLL), 37–57 (GTILVNLIGSFCLAFLTYYVI), 74–94 (MVGAFTTFSTFTVDILGLSTF), and 100–120 (YLLISVVGGFLLAYTGMILGI). 2 residues coordinate Na(+): G76 and T79.

This sequence belongs to the fluoride channel Fluc/FEX (TC 1.A.43) family.

The protein resides in the cell membrane. It catalyses the reaction fluoride(in) = fluoride(out). Na(+) is not transported, but it plays an essential structural role and its presence is essential for fluoride channel function. Its function is as follows. Fluoride-specific ion channel. Important for reducing fluoride concentration in the cell, thus reducing its toxicity. In Ligilactobacillus salivarius (strain UCC118) (Lactobacillus salivarius), this protein is Fluoride-specific ion channel FluC 2.